A 213-amino-acid polypeptide reads, in one-letter code: Small ribosomal subunit protein uS7 (213 aa).

It belongs to the universal ribosomal protein uS7 family. In terms of assembly, component of the small ribosomal subunit (SSU). Mature N.crassa ribosomes consist of a small (40S) and a large (60S) subunit. The 40S small subunit contains 1 molecule of ribosomal RNA (18S rRNA) and at least 32 different proteins. The large 60S subunit contains 3 rRNA molecules (26S, 5.8S and 5S rRNA) and at least 42 different proteins.

Its subcellular location is the cytoplasm. Component of the ribosome, a large ribonucleoprotein complex responsible for the synthesis of proteins in the cell. The small ribosomal subunit (SSU) binds messenger RNAs (mRNAs) and translates the encoded message by selecting cognate aminoacyl-transfer RNA (tRNA) molecules. The large subunit (LSU) contains the ribosomal catalytic site termed the peptidyl transferase center (PTC), which catalyzes the formation of peptide bonds, thereby polymerizing the amino acids delivered by tRNAs into a polypeptide chain. The nascent polypeptides leave the ribosome through a tunnel in the LSU and interact with protein factors that function in enzymatic processing, targeting, and the membrane insertion of nascent chains at the exit of the ribosomal tunnel. This is Small ribosomal subunit protein uS7 (rps-5) from Neurospora crassa (strain ATCC 24698 / 74-OR23-1A / CBS 708.71 / DSM 1257 / FGSC 987).